The following is a 630-amino-acid chain: Ubiquitin carboxyl-terminal hydrolase MINDY-2 (630 aa).

The interval 1–209 (MESGPESLQP…RVPEEEEGAA (209 aa)) is disordered. The span at 24–33 (GSPQEGQQET) shows a compositional bias: polar residues. The residue at position 94 (Ser94) is a Phosphoserine. 2 stretches are compositionally biased toward low complexity: residues 141–163 (EESAAAGSSEPSSGGGLSSSCSD) and 170–191 (SPSLDSLESFSNLHSFPSSSEF). The Nucleophile role is filled by Cys267. Catalysis depends on His449, which acts as the Proton acceptor. The ubiquitin-binding domain (UBD) stretch occupies residues 508-560 (GQQDQIDQDYLMALSLQQEQQSQEINWEQIPEGISDLELAKKLQEEEDRRASQ). The span at 564 to 599 (EQEQAAAAAASASASASASASTQAPQSQPVQASPSS) shows a compositional bias: low complexity. Positions 564 to 630 (EQEQAAAAAA…EKEKNSCVIL (67 aa)) are disordered. A compositionally biased stretch (basic and acidic residues) spans 606–630 (SERKRKEPREKDKEKEKEKNSCVIL).

It belongs to the MINDY deubiquitinase family. FAM63 subfamily.

It carries out the reaction Thiol-dependent hydrolysis of ester, thioester, amide, peptide and isopeptide bonds formed by the C-terminal Gly of ubiquitin (a 76-residue protein attached to proteins as an intracellular targeting signal).. In terms of biological role, hydrolase that can remove 'Lys-48'-linked conjugated ubiquitin from proteins. Can also bind to polyubiquitin chains of different linkage types, including 'Lys-6', 'Lys-11', 'Lys-29', 'Lys-33' and 'Lys-63'. May play a regulatory role at the level of protein turnover. This Bos taurus (Bovine) protein is Ubiquitin carboxyl-terminal hydrolase MINDY-2 (MINDY2).